We begin with the raw amino-acid sequence, 199 residues long: Puromycin N-acetyltransferase (199 aa).

Residues proline 6 to glycine 198 enclose the N-acetyltransferase domain.

Its function is as follows. Detoxification of puromycin. The sequence is that of Puromycin N-acetyltransferase (pac) from Streptomyces alboniger.